The sequence spans 428 residues: AA14 family lytic polysaccharide monooxygenase A (428 aa).

An N-terminal signal peptide occupies residues 1–21 (MLRSLPASLALVAAFASKASA). 2 N-linked (GlcNAc...) asparagine glycosylation sites follow: Asn34 and Asn52. 5 disulfides stabilise this stretch: Cys88-Cys112, Cys131-Cys158, Cys174-Cys179, Cys181-Cys203, and Cys223-Cys239. N-linked (GlcNAc...) asparagine glycosylation is present at Asn155. Disordered stretches follow at residues 216-239 (KPAVPRRCGADPDHGKPDPTPGNC) and 292-428 (SSGT…HNAH). A compositionally biased stretch (basic and acidic residues) spans 223–232 (CGADPDHGKP). N-linked (GlcNAc...) asparagine glycosylation occurs at Asn238. Low complexity predominate over residues 292–379 (SSGTGSSPTS…SVATEASSSP (88 aa)). The span at 380 to 402 (IASTTVDEAVVSSSTVGSINPTR) shows a compositional bias: polar residues. The segment covering 414–428 (QKKKRKHARHLHNAH) has biased composition (basic residues).

The cofactor is Cu(2+).

The protein resides in the secreted. Functionally, lytic polysaccharide monooxygenase (LPMO) showing oxidase and peroxidase activities that are common for LPMOs. Catalysis by LPMOs requires the reduction of the active-site copper from Cu(II) to Cu(I) by a reducing agent and H(2)O(2) or O(2) as a cosubstrate. Shows no activity on cellulose-associated xylan or any other tested polysaccharide substrate, meaning that the substrate rremains unknown. The chain is AA14 family lytic polysaccharide monooxygenase A from Trametes coccinea (strain BRFM310) (Pycnoporus coccineus).